Reading from the N-terminus, the 317-residue chain is Mitochondrial thiamine pyrophosphate carrier 1 (317 aa).

Transmembrane regions (helical) follow at residues 21 to 41 (AVSGLHAVVAGSVSGLVARSV), 86 to 106 (VPASAMYVLYGSLQFGTYAWL), 122 to 142 (LAVGALAGLVSSLLTYPLDLL), 176 to 196 (GGAWAIAATTLTTGLIFGIYE), 207 to 227 (LPWLAAAASPTAGLVSKAAVF), and 281 to 300 (GLTMALCKSTPTTVITLWVY). Solcar repeat units lie at residues 22–109 (VSGL…LNTA), 116–201 (PPQA…CTIA), and 206–306 (GLPW…CLRL).

This sequence belongs to the mitochondrial carrier (TC 2.A.29) family.

It is found in the mitochondrion inner membrane. Its function is as follows. Mitochondrial transporter that mediates uptake of thiamine pyrophosphate (ThPP) into mitochondria. The protein is Mitochondrial thiamine pyrophosphate carrier 1 (TPC1) of Eremothecium gossypii (strain ATCC 10895 / CBS 109.51 / FGSC 9923 / NRRL Y-1056) (Yeast).